The chain runs to 400 residues: Elongation factor Tu (400 aa).

A tr-type G domain is found at Lys-10 to Val-210. The segment at Gly-19–Thr-26 is G1. Gly-19–Thr-26 lines the GTP pocket. Thr-26 contributes to the Mg(2+) binding site. A G2 region spans residues Ile-66 to Ala-70. The segment at Asp-87–Gly-90 is G3. Residues Asp-87–His-91 and Asn-142–Asp-145 each bind GTP. Residues Asn-142–Asp-145 form a G4 region. The tract at residues Ser-180 to Ile-182 is G5.

Belongs to the TRAFAC class translation factor GTPase superfamily. Classic translation factor GTPase family. EF-Tu/EF-1A subfamily. Monomer.

It is found in the cytoplasm. It catalyses the reaction GTP + H2O = GDP + phosphate + H(+). In terms of biological role, GTP hydrolase that promotes the GTP-dependent binding of aminoacyl-tRNA to the A-site of ribosomes during protein biosynthesis. The sequence is that of Elongation factor Tu from Gemmatimonas aurantiaca (strain DSM 14586 / JCM 11422 / NBRC 100505 / T-27).